The primary structure comprises 124 residues: Small ribosomal subunit protein uS12 (124 aa).

3-methylthioaspartic acid is present on Asp-89.

This sequence belongs to the universal ribosomal protein uS12 family. As to quaternary structure, part of the 30S ribosomal subunit. Contacts proteins S8 and S17. May interact with IF1 in the 30S initiation complex.

In terms of biological role, with S4 and S5 plays an important role in translational accuracy. Its function is as follows. Interacts with and stabilizes bases of the 16S rRNA that are involved in tRNA selection in the A site and with the mRNA backbone. Located at the interface of the 30S and 50S subunits, it traverses the body of the 30S subunit contacting proteins on the other side and probably holding the rRNA structure together. The combined cluster of proteins S8, S12 and S17 appears to hold together the shoulder and platform of the 30S subunit. In Leptospira biflexa serovar Patoc (strain Patoc 1 / Ames), this protein is Small ribosomal subunit protein uS12.